A 143-amino-acid polypeptide reads, in one-letter code: Transcriptional regulator MraZ (143 aa).

SpoVT-AbrB domains lie at Glu5–Glu47 and Ala76–Arg119.

The protein belongs to the MraZ family. Forms oligomers.

The protein localises to the cytoplasm. Its subcellular location is the nucleoid. The chain is Transcriptional regulator MraZ from Lactobacillus gasseri (strain ATCC 33323 / DSM 20243 / BCRC 14619 / CIP 102991 / JCM 1131 / KCTC 3163 / NCIMB 11718 / NCTC 13722 / AM63).